The sequence spans 474 residues: Trigger factor (474 aa).

The region spanning glycine 174–proline 261 is the PPIase FKBP-type domain. The disordered stretch occupies residues valine 435–lysine 474. The segment covering threonine 442–threonine 467 has biased composition (low complexity).

Belongs to the FKBP-type PPIase family. Tig subfamily.

The protein resides in the cytoplasm. The catalysed reaction is [protein]-peptidylproline (omega=180) = [protein]-peptidylproline (omega=0). Its function is as follows. Involved in protein export. Acts as a chaperone by maintaining the newly synthesized protein in an open conformation. Functions as a peptidyl-prolyl cis-trans isomerase. The polypeptide is Trigger factor (Prochlorococcus marinus (strain AS9601)).